The primary structure comprises 204 residues: Somatotropin (204 aa).

The first 17 residues, Met1–Ser17, serve as a signal peptide directing secretion. Pyrrolidone carboxylic acid is present on Gln18. His36 serves as a coordination point for Zn(2+). Cysteines 69 and 177 form a disulfide. Glu186 is a binding site for Zn(2+). Cys194 and Cys202 are joined by a disulfide.

The protein belongs to the somatotropin/prolactin family.

Its subcellular location is the secreted. Growth hormone plays an important role in growth control and is involved in the regulation of several anabolic processes. Implicated as an osmoregulatory substance important for seawater adaptation. The sequence is that of Somatotropin (gh) from Sciaenops ocellatus (Red drum).